Reading from the N-terminus, the 274-residue chain is Protein-export membrane protein SecF (274 aa).

6 helical membrane-spanning segments follow: residues 14 to 34 (LLIL…ALGV), 121 to 141 (SVKV…FAIF), 143 to 163 (KPLL…DALG), 175 to 197 (ASFA…LSMY), 217 to 237 (TGIT…LLSM), and 247 to 267 (VVIF…AWVI).

The protein belongs to the SecD/SecF family. SecF subfamily. Part of the protein translocation apparatus. Forms a complex with SecD.

The protein resides in the cell membrane. Its function is as follows. Involved in protein export. The polypeptide is Protein-export membrane protein SecF (Methanopyrus kandleri (strain AV19 / DSM 6324 / JCM 9639 / NBRC 100938)).